Consider the following 160-residue polypeptide: Nucleotide-binding protein MADE_1020535 (160 aa).

Belongs to the YajQ family.

Nucleotide-binding protein. The protein is Nucleotide-binding protein MADE_1020535 of Alteromonas mediterranea (strain DSM 17117 / CIP 110805 / LMG 28347 / Deep ecotype).